A 295-amino-acid polypeptide reads, in one-letter code: Cbb3-type cytochrome c oxidase subunit CcoP (295 aa).

The Cytoplasmic portion of the chain corresponds to 1-31 (MAQKEKDALSGVETTGHEWDGLRELNNPLPK). A helical membrane pass occupies residues 32–52 (WWLYIFYVCIAWSLVYYVLYP). Residues 53–295 (AWPLGKSYTK…VYVHNLGGGK (243 aa)) lie on the Periplasmic side of the membrane. 2 consecutive Cytochrome c domains span residues 108–200 (FAMA…LSLN) and 207–292 (AAAE…HNLG). 8 residues coordinate heme c: Cys-121, Cys-124, His-125, Met-175, Cys-220, Cys-223, His-224, and Met-269.

It belongs to the CcoP / FixP family. Component of the cbb3-type cytochrome c oxidase at least composed of CcoN, CcoO, CcoQ and CcoP. Heme c is required as a cofactor.

It is found in the cell inner membrane. It functions in the pathway energy metabolism; oxidative phosphorylation. Its function is as follows. C-type cytochrome. Part of the cbb3-type cytochrome c oxidase complex. CcoP subunit is required for transferring electrons from donor cytochrome c via its heme groups to CcoO subunit. From there, electrons are shuttled to the catalytic binuclear center of CcoN subunit where oxygen reduction takes place. The complex also functions as a proton pump. This Azospirillum brasilense protein is Cbb3-type cytochrome c oxidase subunit CcoP.